A 447-amino-acid polypeptide reads, in one-letter code: Acid phosphatase (447 aa).

The first 17 residues, 1-17 (MKPSVATLLATVSLVYA), serve as a signal peptide directing secretion. Asparagine 119, asparagine 150, asparagine 177, asparagine 186, and asparagine 208 each carry an N-linked (GlcNAc...) asparagine glycan. Aspartate 215 acts as the Proton donor in catalysis. N-linked (GlcNAc...) asparagine glycosylation is found at asparagine 217, asparagine 234, asparagine 240, asparagine 315, asparagine 332, asparagine 382, and asparagine 405. Residue serine 419 is the site of GPI-like-anchor amidated serine attachment. Positions 420–447 (ASSNAAVSAVAPAAGVSGLLLGLALNLL) are cleaved as a propeptide — removed in mature form.

In terms of processing, the GPI-like anchor contains a phosphoceramide lipid group. The anchor position has not been determined.

It localises to the cell membrane. The enzyme catalyses a phosphate monoester + H2O = an alcohol + phosphate. Its activity is regulated as follows. Inhibited by NaF, molybdate and vanadate. Its function is as follows. Has both phosphomonoesterase and phosphodiesterase activity. Cleaves a broad range of phosphate esters. This is Acid phosphatase (phoA) from Aspergillus fumigatus (strain ATCC MYA-4609 / CBS 101355 / FGSC A1100 / Af293) (Neosartorya fumigata).